The sequence spans 282 residues: tRNA pseudouridine synthase A (282 aa).

Asp61 functions as the Nucleophile in the catalytic mechanism. Tyr119 provides a ligand contact to substrate.

It belongs to the tRNA pseudouridine synthase TruA family. As to quaternary structure, homodimer.

The enzyme catalyses uridine(38/39/40) in tRNA = pseudouridine(38/39/40) in tRNA. Its function is as follows. Formation of pseudouridine at positions 38, 39 and 40 in the anticodon stem and loop of transfer RNAs. This Nostoc sp. (strain PCC 7120 / SAG 25.82 / UTEX 2576) protein is tRNA pseudouridine synthase A.